The primary structure comprises 421 residues: Serine protease HTRA2, mitochondrial (421 aa).

A helical membrane pass occupies residues 63–81 (VIRFFVPFSLGALASTMVA). The IAP-binding signature appears at 74–77 (ALAS). A serine protease region spans residues 138-301 (SNGSGFVIEQ…IPIDYVKVFL (164 aa)). Catalysis depends on charge relay system residues His-156, Asp-188, and Ser-265. Residues 324–409 (MGITMLTLTP…ELDIVILRGV (86 aa)) enclose the PDZ domain.

Belongs to the peptidase S1C family. In terms of assembly, interacts with th/DIAP1 (via BIR 2 domain).

The protein localises to the mitochondrion intermembrane space. It localises to the mitochondrion membrane. The enzyme catalyses Cleavage of non-polar aliphatic amino-acids at the P1 position, with a preference for Val, Ile and Met. At the P2 and P3 positions, Arg is selected most strongly with a secondary preference for other hydrophilic residues.. Serine protease that shows proteolytic activity against a non-specific substrate beta-casein. Promotes or induces cell death either by direct binding to and inhibition of BIRC proteins (also called inhibitor of apoptosis proteins, IAPs), leading to an increase in caspase activity, or by a BIRC inhibition-independent, caspase-independent and serine protease activity-dependent mechanism. Can antagonize antiapoptotic activity of th/Diap1 by directly inducing the degradation of th/Diap1. In Drosophila virilis (Fruit fly), this protein is Serine protease HTRA2, mitochondrial.